A 287-amino-acid chain; its full sequence is Formamidopyrimidine-DNA glycosylase (287 aa).

The active-site Schiff-base intermediate with DNA is the proline 2. Catalysis depends on glutamate 3, which acts as the Proton donor. Lysine 61 acts as the Proton donor; for beta-elimination activity in catalysis. DNA contacts are provided by histidine 95, arginine 115, and arginine 157. An FPG-type zinc finger spans residues 243–277 (NVYGRADQPCRRCGTPVRREAFMNRSSYSCPRCQP). Arginine 267 functions as the Proton donor; for delta-elimination activity in the catalytic mechanism.

It belongs to the FPG family. As to quaternary structure, monomer. It depends on Zn(2+) as a cofactor.

It catalyses the reaction Hydrolysis of DNA containing ring-opened 7-methylguanine residues, releasing 2,6-diamino-4-hydroxy-5-(N-methyl)formamidopyrimidine.. The catalysed reaction is 2'-deoxyribonucleotide-(2'-deoxyribose 5'-phosphate)-2'-deoxyribonucleotide-DNA = a 3'-end 2'-deoxyribonucleotide-(2,3-dehydro-2,3-deoxyribose 5'-phosphate)-DNA + a 5'-end 5'-phospho-2'-deoxyribonucleoside-DNA + H(+). Functionally, involved in base excision repair of DNA damaged by oxidation or by mutagenic agents. Acts as a DNA glycosylase that recognizes and removes damaged bases. Has a preference for oxidized purines, such as 7,8-dihydro-8-oxoguanine (8-oxoG). Has AP (apurinic/apyrimidinic) lyase activity and introduces nicks in the DNA strand. Cleaves the DNA backbone by beta-delta elimination to generate a single-strand break at the site of the removed base with both 3'- and 5'-phosphates. In Salinispora arenicola (strain CNS-205), this protein is Formamidopyrimidine-DNA glycosylase.